The following is a 211-amino-acid chain: Orotate phosphoribosyltransferase (211 aa).

Lysine 26 provides a ligand contact to 5-phospho-alpha-D-ribose 1-diphosphate. 34–35 is a binding site for orotate; it reads FF. Residues 72-73, arginine 98, lysine 99, lysine 102, histidine 104, and 123-131 each bind 5-phospho-alpha-D-ribose 1-diphosphate; these read YK and DDVITAGTA. 2 residues coordinate orotate: threonine 127 and arginine 155.

Belongs to the purine/pyrimidine phosphoribosyltransferase family. PyrE subfamily. In terms of assembly, homodimer. Mg(2+) is required as a cofactor.

The enzyme catalyses orotidine 5'-phosphate + diphosphate = orotate + 5-phospho-alpha-D-ribose 1-diphosphate. It participates in pyrimidine metabolism; UMP biosynthesis via de novo pathway; UMP from orotate: step 1/2. In terms of biological role, catalyzes the transfer of a ribosyl phosphate group from 5-phosphoribose 1-diphosphate to orotate, leading to the formation of orotidine monophosphate (OMP). The sequence is that of Orotate phosphoribosyltransferase from Legionella pneumophila (strain Lens).